A 238-amino-acid chain; its full sequence is Zwei Ig domain protein zig-2 (238 aa).

An N-terminal signal peptide occupies residues 1-17 (MLKFTAISFVLLNAAES). The region spanning 31-130 (PLLKFTRTPN…NGLTKLEHVA (100 aa)) is the Ig-like C2-type 1 domain. N-linked (GlcNAc...) asparagine glycosylation is found at N40 and N43. C54 and C117 form a disulfide bridge. N-linked (GlcNAc...) asparagine glycosylation is found at N137, N206, and N216. Residues 149–230 (PFISMTVDFR…NHFGETTAIT (82 aa)) enclose the Ig-like C2-type 2 domain. C170 and C217 form a disulfide bridge.

In terms of tissue distribution, expressed in PVT neurons and weakly in some head neurons.

It is found in the secreted. Probably not involved in maintaining the position of ASI and ASH head neuron cell bodies and ventral nerve cord axons of PVQ, PVP, RMEV, AVK and HSN neurons. The sequence is that of Zwei Ig domain protein zig-2 from Caenorhabditis elegans.